Here is a 187-residue protein sequence, read N- to C-terminus: 1,6-anhydro-N-acetylmuramyl-L-alanine amidase AmpD (187 aa).

An N-acetylmuramoyl-L-alanine amidase domain is found at 29 to 167; it reads TLLVVHNISL…APERKTDPGP (139 aa). His34 is a Zn(2+) binding site. The active-site Proton acceptor is Glu116. Positions 154 and 164 each coordinate Zn(2+).

Belongs to the N-acetylmuramoyl-L-alanine amidase 2 family. Zn(2+) serves as cofactor.

The protein resides in the cytoplasm. The enzyme catalyses Hydrolyzes the link between N-acetylmuramoyl residues and L-amino acid residues in certain cell-wall glycopeptides.. Involved in cell wall peptidoglycan recycling. Specifically cleaves the amide bond between the lactyl group of N-acetylmuramic acid and the alpha-amino group of the L-alanine in degradation products containing an anhydro N-acetylmuramyl moiety. The sequence is that of 1,6-anhydro-N-acetylmuramyl-L-alanine amidase AmpD from Enterobacter cloacae.